The following is a 105-amino-acid chain: Large ribosomal subunit protein uL24 (105 aa).

The protein belongs to the universal ribosomal protein uL24 family. As to quaternary structure, part of the 50S ribosomal subunit.

Its function is as follows. One of two assembly initiator proteins, it binds directly to the 5'-end of the 23S rRNA, where it nucleates assembly of the 50S subunit. Functionally, one of the proteins that surrounds the polypeptide exit tunnel on the outside of the subunit. The sequence is that of Large ribosomal subunit protein uL24 from Anaplasma marginale (strain St. Maries).